We begin with the raw amino-acid sequence, 74 residues long: Protein SlyX homolog (74 aa).

Belongs to the SlyX family.

The protein is Protein SlyX homolog of Neisseria meningitidis serogroup C (strain 053442).